A 104-amino-acid chain; its full sequence is Integration host factor subunit beta (104 aa).

This sequence belongs to the bacterial histone-like protein family. Heterodimer of an alpha and a beta chain.

Its function is as follows. This protein is one of the two subunits of integration host factor, a specific DNA-binding protein that functions in genetic recombination as well as in transcriptional and translational control. This chain is Integration host factor subunit beta (ihfB), found in Neisseria gonorrhoeae.